We begin with the raw amino-acid sequence, 365 residues long: MEVKEALFMNRGEGENSYAQNSSFTQKVASMTMPVLENAVETLFSKDFHLLQALNVVDLGCATSPNTFTVISTIKRMMEKKCRELNCQTLELQVYLNDLPGNDFNTLFKGLLSKVVVGNKCEEVSCYVMGVPGSFHGRLFPRNSLRLVHSCYSAHWLSQAPKGLTSREGLALNRRKIYISKTSPLVVREAYLSQFHEDFTMFLNARSQEVVPNGCMVLILPGRQSSNPSSMESCFTWELLAIAIGELVSQGLIDEDKLDTFNVPSYFPSLEEVKDIVERDGSFTIDHMVGFELDTPQMQENDKWVRVEKLAKAVRAFTEPIISNQFGHEIMDKLYDKFTYIVVSDLEGKIPKTTSIVLVLSKIIG.

Residue Y18 participates in S-adenosyl-L-homocysteine binding. T25 is a caffeine binding site. 6 residues coordinate S-adenosyl-L-homocysteine: C61, N66, D98, L99, S134, and F135. Positions 152, 155, and 156 each coordinate caffeine. Mg(2+) contacts are provided by N173, D259, F261, and N262. Position 317 (F317) interacts with caffeine.

Belongs to the methyltransferase superfamily. Type-7 methyltransferase family. It depends on Mg(2+) as a cofactor.

It participates in alkaloid biosynthesis. May be involved in the biosynthesis of caffeine. This is Probable caffeine synthase 5 from Camellia sinensis (Tea plant).